Consider the following 374-residue polypeptide: Carbamoyl phosphate synthase small chain (374 aa).

Residues 1–186 (MTEHAILVLE…DRNECKRAAP (186 aa)) are CPSase. Ser47, Gly237, and Gly239 together coordinate L-glutamine. One can recognise a Glutamine amidotransferase type-1 domain in the interval 189–374 (KVVAYDYGVK…RFITMMAAQS (186 aa)). Catalysis depends on Cys265, which acts as the Nucleophile. Residues Leu266, Gln269, Asn307, Gly309, and Phe310 each coordinate L-glutamine. Catalysis depends on residues His349 and Glu351.

It belongs to the CarA family. As to quaternary structure, composed of two chains; the small (or glutamine) chain promotes the hydrolysis of glutamine to ammonia, which is used by the large (or ammonia) chain to synthesize carbamoyl phosphate. Tetramer of heterodimers (alpha,beta)4.

The enzyme catalyses hydrogencarbonate + L-glutamine + 2 ATP + H2O = carbamoyl phosphate + L-glutamate + 2 ADP + phosphate + 2 H(+). It catalyses the reaction L-glutamine + H2O = L-glutamate + NH4(+). It functions in the pathway amino-acid biosynthesis; L-arginine biosynthesis; carbamoyl phosphate from bicarbonate: step 1/1. Its pathway is pyrimidine metabolism; UMP biosynthesis via de novo pathway; (S)-dihydroorotate from bicarbonate: step 1/3. Small subunit of the glutamine-dependent carbamoyl phosphate synthetase (CPSase). CPSase catalyzes the formation of carbamoyl phosphate from the ammonia moiety of glutamine, carbonate, and phosphate donated by ATP, constituting the first step of 2 biosynthetic pathways, one leading to arginine and/or urea and the other to pyrimidine nucleotides. The small subunit (glutamine amidotransferase) binds and cleaves glutamine to supply the large subunit with the substrate ammonia. This Xylella fastidiosa (strain Temecula1 / ATCC 700964) protein is Carbamoyl phosphate synthase small chain.